The sequence spans 334 residues: Acryloyl-coenzyme A reductase (334 aa).

Cys-38 provides a ligand contact to Zn(2+). Tyr-39 lines the NADP(+) pocket. Zn(2+) contacts are provided by His-60, Asp-90, Cys-93, Cys-96, Cys-104, and Cys-146. NADP(+) is bound by residues 173-176 (SGGV) and 195-197 (TTS).

This sequence belongs to the zinc-containing alcohol dehydrogenase family. As to quaternary structure, monomer. Zn(2+) serves as cofactor.

It catalyses the reaction propanoyl-CoA + NADP(+) = acryloyl-CoA + NADPH + H(+). Its function is as follows. Plays a role in autotrophic carbon fixation via the 3-hydroxypropionate/4-hydroxybutyrate cycle. Catalyzes the acryloyl-CoA dependent NADPH oxidation and formation of propionyl-CoA. Inactive towards 3-hydroxypropionyl-CoA, NADH and crotonyl-CoA. This chain is Acryloyl-coenzyme A reductase, found in Sulfurisphaera tokodaii (strain DSM 16993 / JCM 10545 / NBRC 100140 / 7) (Sulfolobus tokodaii).